The chain runs to 244 residues: Ribonuclease PH (244 aa).

Phosphate contacts are provided by residues Arg-86 and 124–126 (GTR).

It belongs to the RNase PH family. In terms of assembly, homohexameric ring arranged as a trimer of dimers.

It carries out the reaction tRNA(n+1) + phosphate = tRNA(n) + a ribonucleoside 5'-diphosphate. In terms of biological role, phosphorolytic 3'-5' exoribonuclease that plays an important role in tRNA 3'-end maturation. Removes nucleotide residues following the 3'-CCA terminus of tRNAs; can also add nucleotides to the ends of RNA molecules by using nucleoside diphosphates as substrates, but this may not be physiologically important. Probably plays a role in initiation of 16S rRNA degradation (leading to ribosome degradation) during starvation. The sequence is that of Ribonuclease PH from Oceanobacillus iheyensis (strain DSM 14371 / CIP 107618 / JCM 11309 / KCTC 3954 / HTE831).